The sequence spans 586 residues: Pectinesterase 1 (586 aa).

A signal peptide spans 1-49; it reads MDSVNSFKGYGKVDEAQDLALKKKTRKRLLLLSISVVVLIAVIIAAVVA. N-linked (GlcNAc...) asparagine glycosylation is found at N57, N97, N154, N201, and N207. The RRLM cleavage motif motif lies at 250–253; the sequence is RRLM. Positions 269–272 match the RRLL cleavage motif motif; it reads RRLL. Positions 355 and 385 each coordinate substrate. D408 serves as the catalytic Proton donor. A disulfide bridge connects residues C422 and C442. D429 functions as the Nucleophile in the catalytic mechanism. N-linked (GlcNAc...) asparagine glycosylation occurs at N466. Substrate-binding residues include R492 and W494.

It in the N-terminal section; belongs to the PMEI family. This sequence in the C-terminal section; belongs to the pectinesterase family. In terms of assembly, interacts with SBT6.1. Expressed in siliques.

Its subcellular location is the secreted. The protein localises to the cell wall. It is found in the golgi apparatus membrane. The catalysed reaction is [(1-&gt;4)-alpha-D-galacturonosyl methyl ester](n) + n H2O = [(1-&gt;4)-alpha-D-galacturonosyl](n) + n methanol + n H(+). The protein operates within glycan metabolism; pectin degradation; 2-dehydro-3-deoxy-D-gluconate from pectin: step 1/5. Its function is as follows. Acts in the modification of cell walls via demethylesterification of cell wall pectin. Demethylates protein phosphatase 2A (PP2A) that have been reversibly carboxymethylated by LCMT1. Acts as a negative regulators of genes involved in salt stress response. This is Pectinesterase 1 (PME1) from Arabidopsis thaliana (Mouse-ear cress).